The following is a 37-amino-acid chain: Large ribosomal subunit protein bL36A (37 aa).

This sequence belongs to the bacterial ribosomal protein bL36 family.

This is Large ribosomal subunit protein bL36A from Actinobacillus pleuropneumoniae serotype 3 (strain JL03).